Consider the following 729-residue polypeptide: Solute carrier family 15 member 2 (729 aa).

The tract at residues 1-34 (MNPFQQNESKETLFSPVSTEETPPRLSSPAKKTP) is disordered. Over 1–57 (MNPFQQNESKETLFSPVSTEETPPRLSSPAKKTPPKICGSNYPLSIAFIVVNEFCER) the chain is Cytoplasmic. Ser-9 is modified (phosphoserine). Thr-12 carries the phosphothreonine modification. Ser-28 carries the post-translational modification Phosphoserine. Residues 58–78 (FSYYGMKAVLTLYFLYFLHWN) form a helical membrane-spanning segment. Over 79 to 87 (EDTSTSVYH) the chain is Extracellular. A helical transmembrane segment spans residues 88–108 (AFSSLCYFTPILGAAIADSWL). Topologically, residues 109-113 (GKFKT) are cytoplasmic. Residues 114-134 (IIYLSLVNVLGHVIKSLSAFP) traverse the membrane as a helical segment. The Extracellular segment spans residues 135–139 (ILGGK). Residues 140-160 (VVHTVLSLVGLCLIALGTGGI) form a helical membrane-spanning segment. At 161-183 (KPCVAAFGGDQFEEKHAEERTRY) the chain is on the cytoplasmic side. Residues 184–204 (FSGFYLAINAGSLISTFITPM) form a helical membrane-spanning segment. Residues 205-217 (LRGDVQCFGEDCY) lie on the Extracellular side of the membrane. A helical transmembrane segment spans residues 218-238 (ALAFGVPGLLMVIALVVFAMG). Topologically, residues 239-295 (SKMYKKPPPEGNIVAQVVKCIWFAISNRFKNRSEDIPKRQHWLDWAAEKYPKQLIMD) are cytoplasmic. A helical membrane pass occupies residues 296-316 (VKTLTRVLFLYIPLPMFWALL). The Extracellular segment spans residues 317–343 (DQQGSRWTLQATKMNGNLGFFVLQPDQ). The helical transmembrane segment at 344–364 (MQVLNPLLVLIFIPLFDLVIY) threads the bilayer. The Cytoplasmic portion of the chain corresponds to 365–380 (RLISKCGINFTSLRKM). Residues 381–401 (AVGMVLACLAFAAAATVEIKI) form a helical membrane-spanning segment. Topologically, residues 402 to 611 (NEMAPPQPGS…PANKVSIAWQ (210 aa)) are extracellular. Residues 402–611 (NEMAPPQPGS…PANKVSIAWQ (210 aa)) are extracellular domain (ECD). N-linked (GlcNAc...) asparagine glycosylation is found at Asn-435, Asn-472, Asn-508, Asn-528, and Asn-587. Residues 612–632 (LPQYALVTAGEVMFSVTGLEF) traverse the membrane as a helical segment. Residues 633-643 (SYSQAPSSMKS) are Cytoplasmic-facing. The helical transmembrane segment at 644 to 664 (VLQAAWLLTVAIGNIIVLVVA) threads the bilayer. At 665–674 (QFSGLVQWAE) the chain is on the extracellular side. A helical membrane pass occupies residues 675-695 (FVLFSCLLLVVCLIFSIMGYY). The Cytoplasmic portion of the chain corresponds to 696–729 (YIPIKSEDIQGPEDKQIPHMQGNMINLETKKTKL).

It belongs to the major facilitator superfamily. Proton-dependent oligopeptide transporter (POT/PTR) (TC 2.A.17) family. Interacts (via extracellular domain region) with trypsin. In terms of tissue distribution, strongly expressed in kidney. Also detected in brain, lung, liver and heart.

It is found in the apical cell membrane. The protein resides in the cytoplasmic vesicle. Its subcellular location is the phagosome membrane. It localises to the cell membrane. It catalyses the reaction a dipeptide(out) + 2 H(+)(out) = a dipeptide(in) + 2 H(+)(in). The enzyme catalyses N-acetyl-D-muramoyl-L-alanyl-D-isoglutamine(out) + 3 H(+)(out) = N-acetyl-D-muramoyl-L-alanyl-D-isoglutamine(in) + 3 H(+)(in). The catalysed reaction is glycyl-L-leucine(out) + 2 H(+)(out) = glycyl-L-leucine(in) + 2 H(+)(in). It carries out the reaction glycyl-L-lysine(out) + 2 H(+)(out) = glycyl-L-lysine(in) + 2 H(+)(in). It catalyses the reaction glycyl-L-glutamate(out) + 3 H(+)(out) = glycyl-L-glutamate(in) + 3 H(+)(in). The enzyme catalyses L-alanyl-L-alanine(out) + 2 H(+)(out) = L-alanyl-L-alanine(in) + 2 H(+)(in). The catalysed reaction is an L-amino acid tripeptide(out) + 2 H(+)(out) = an L-amino acid tripeptide(in) + 2 H(+)(in). It carries out the reaction carnosine(out) + 2 H(+)(out) = carnosine(in) + 2 H(+)(in). Its function is as follows. Proton-coupled amino-acid transporter that transports oligopeptides of 2 to 4 amino acids with a preference for dipeptides. Transports neutral and anionic dipeptides with a proton to peptide stoichiometry of 2:1 or 3:1. In kidney, involved in the absorption of circulating di- and tripeptides from the glomerular filtrate. Can also transport beta-lactam antibiotics, such as the aminocephalosporin cefadroxil, and other antiviral and anticancer drugs. Transports the dipeptide-like aminopeptidase inhibitor bestatin. Also able to transport carnosine. Involved in innate immunity by promoting the detection of microbial pathogens by NOD-like receptors (NLRs). Mediates transport of bacterial peptidoglycans across the plasma membrane or, in macrophages, the phagosome membrane: catalyzes the transport of certain bacterial peptidoglycans, such as muramyl dipeptide (MDP), the NOD2 ligand. This chain is Solute carrier family 15 member 2, found in Oryctolagus cuniculus (Rabbit).